The primary structure comprises 377 residues: MSRGIIIIGSGFAARQLVKNIRKQDAHVPLTLIAADSMDEYNKPDLSHVISQSQRADDLTRQLAGEFAEQFNLRLFPHTWVTDIDADAHVVKSQDKQWQYDKLVLATGAAAFVPPIAGRELMLTLNNQQEYRACETPLRDAQRVLIVGGGLIGSELAMDFCRAGKTVTLMDNAASLLASLMPPEVSSRLQHHLTDMGVHLLLKSQLQKLEKIEAGIRATLASQRSIEVDAVIAATGLRPETALARRAGVVVNRGVCVDSYLQTSHPDIYAIGDCAEINGQVLPFLQPIQLSAMYLAKNLLGGNAPLKLPAMLVKVKTPELPLHLAGETQRRDLSWQITAESDGMIAKGMSGEGQLRAFVVSEDRMKEAFALLKTLSV.

This sequence belongs to the FAD-dependent oxidoreductase family. The cofactor is FAD.

The protein resides in the cytoplasm. The catalysed reaction is 2 reduced [nitric oxide reductase rubredoxin domain] + NAD(+) + H(+) = 2 oxidized [nitric oxide reductase rubredoxin domain] + NADH. The protein operates within nitrogen metabolism; nitric oxide reduction. Functionally, one of at least two accessory proteins for anaerobic nitric oxide (NO) reductase. Reduces the rubredoxin moiety of NO reductase. The sequence is that of Nitric oxide reductase FlRd-NAD(+) reductase from Salmonella paratyphi A (strain AKU_12601).